The sequence spans 413 residues: Putative competence-damage inducible protein (413 aa).

It belongs to the CinA family.

The sequence is that of Putative competence-damage inducible protein from Lacticaseibacillus paracasei (strain ATCC 334 / BCRC 17002 / CCUG 31169 / CIP 107868 / KCTC 3260 / NRRL B-441) (Lactobacillus paracasei).